We begin with the raw amino-acid sequence, 335 residues long: Malate dehydrogenase (335 aa).

Residue 11-17 (GAAGQIG) coordinates NAD(+). Positions 94 and 100 each coordinate substrate. NAD(+) is bound by residues asparagine 107, glutamine 114, and 131-133 (VGN). Asparagine 133 and arginine 167 together coordinate substrate. The active-site Proton acceptor is the histidine 192.

This sequence belongs to the LDH/MDH superfamily. MDH type 2 family.

It catalyses the reaction (S)-malate + NAD(+) = oxaloacetate + NADH + H(+). Its function is as follows. Catalyzes the reversible oxidation of malate to oxaloacetate. This is Malate dehydrogenase from Bdellovibrio bacteriovorus (strain ATCC 15356 / DSM 50701 / NCIMB 9529 / HD100).